We begin with the raw amino-acid sequence, 327 residues long: MSLNPPNNLEHIITSQTLKWVFVGGKGGVGKTTTSCSLGVLIADRNPQKKVLIISTDPAHNTSDAFDIKFGAEPKVVPGVPNLSVMEIDVKDAMKGVFDESEQGTNQNGGFGLLSELTGMMGMLKSVPGIDEAIAFSQIINQAQQMNYDLVLFDTAPTGHTLRFLSLPTLLRDMLEKVIKLQDSFGPMMSQFGGMMGMNINFNELKPKMEHMLKTSEQIVEDFTNPNLTTFIPVLIPEFLPLYETERLIQELMNLNMDANSIIVNQILPVNDCCDYCKNKRAIQAKYLGQIDVLYGDFHLIKINMQTNEVRGVAALRAFSKNFEAKH.

Residue 26–33 (KGGVGKTT) participates in ATP binding. D57 is an active-site residue. ATP contacts are provided by E238 and N265. Positions 274 and 277 each coordinate Zn(2+).

This sequence belongs to the arsA ATPase family. As to quaternary structure, homodimer.

Its subcellular location is the cytoplasm. The protein resides in the endoplasmic reticulum. Its function is as follows. ATPase required for the post-translational delivery of tail-anchored (TA) proteins to the endoplasmic reticulum. Recognizes and selectively binds the transmembrane domain of TA proteins in the cytosol. This complex then targets to the endoplasmic reticulum by membrane-bound receptors, where the tail-anchored protein is released for insertion. This process is regulated by ATP binding and hydrolysis. ATP binding drives the homodimer towards the closed dimer state, facilitating recognition of newly synthesized TA membrane proteins. ATP hydrolysis is required for insertion. Subsequently, the homodimer reverts towards the open dimer state, lowering its affinity for the membrane-bound receptor, and returning it to the cytosol to initiate a new round of targeting. This is ATPase ASNA1 homolog from Entamoeba histolytica (strain ATCC 30459 / HM-1:IMSS / ABRM).